We begin with the raw amino-acid sequence, 383 residues long: Smad nuclear-interacting protein 1 (383 aa).

Residues 1–10 are compositionally biased toward basic and acidic residues; the sequence is MKAGKSERER. The tract at residues 1–209 is disordered; that stretch reads MKAGKSERER…NRSKEVPVKE (209 aa). A Phosphoserine modification is found at S18. K28 is covalently cross-linked (Glycyl lysine isopeptide (Lys-Gly) (interchain with G-Cter in SUMO); alternate). K28 participates in a covalent cross-link: Glycyl lysine isopeptide (Lys-Gly) (interchain with G-Cter in SUMO1); alternate. A Glycyl lysine isopeptide (Lys-Gly) (interchain with G-Cter in SUMO2); alternate cross-link involves residue K28. Positions 28–43 are enriched in basic and acidic residues; sequence KQERLSPEPVAHRRPD. Residues S33, S48, and S50 each carry the phosphoserine modification. Low complexity predominate over residues 44 to 56; the sequence is APAASLSPPAAEP. The segment covering 59–90 has biased composition (basic residues); it reads SGHRGSRARSPAKKKSKSSGRRSKSPRTKRSQ. Residue S91 is modified to Phosphoserine. Composition is skewed to basic and acidic residues over residues 99–134 and 143–159; these read VKQE…ERDR and RSSD…DRDS. K100 is covalently cross-linked (Glycyl lysine isopeptide (Lys-Gly) (interchain with G-Cter in SUMO2)). Position 145 is a phosphoserine (S145). Residues 153–194 are a coiled coil; the sequence is QDRDRDSQNLQAQEEERDFHNARRREHRQQNESAGSEAQEVI. A Glycyl lysine isopeptide (Lys-Gly) (interchain with G-Cter in SUMO2) cross-link involves residue K210. The 64-residue stretch at 268–331 folds into the FHA domain; sequence YLLGRHRRIA…NGTFLNNKRI (64 aa). The span at 359 to 369 shows a compositional bias: basic and acidic residues; that stretch reads ESSDTSELDRK. A disordered region spans residues 359-383; the sequence is ESSDTSELDRKEDEDDEEEEMVSDS. The segment covering 370–383 has biased composition (acidic residues); that stretch reads EDEDDEEEEMVSDS. S381 carries the post-translational modification Phosphoserine.

As to quaternary structure, component of activated spliceosome complexes. Binds SMAD4 and CREBBP/EP300. Component of the minor spliceosome, which splices U12-type introns. Binds the SMAD1/OAZ1/PSMB4 complex. Interacts with DROSHA and SMARCA4. Component of the SNARP complex which consists at least of SNIP1, SNW1, THRAP3, BCLAF1 and PNN. Degraded by the proteasome upon binding to the SMAD1/OAZ1/PSMB4 complex.

The protein resides in the nucleus. Its function is as follows. Required for pre-mRNA splicing as component of the spliceosome. As a component of the minor spliceosome, involved in the splicing of U12-type introns in pre-mRNAs. Down-regulates NF-kappa-B signaling by competing with RELA for CREBBP/EP300 binding. Involved in the microRNA (miRNA) biogenesis. May be involved in cyclin-D1/CCND1 mRNA stability through the SNARP complex which associates with both the 3'end of the CCND1 gene and its mRNA. The chain is Smad nuclear-interacting protein 1 (Snip1) from Mus musculus (Mouse).